The primary structure comprises 775 residues: Endothelin-converting enzyme-like 1 (775 aa).

The Cytoplasmic segment spans residues 1–61 (MEAPYSMTAH…LPRWNRREVC (61 aa)). The tract at residues 23 to 51 (CGTGGARGTSLPPGFPRSSGRSASGARSG) is disordered. A compositionally biased stretch (low complexity) spans 32 to 51 (SLPPGFPRSSGRSASGARSG). A helical; Signal-anchor for type II membrane protein membrane pass occupies residues 62–82 (LLSGLVFAAGLCAILAAMLAL). Residues 83–775 (KYLGPGAAGT…MNPVHKCSVW (693 aa)) lie on the Lumenal side of the membrane. The Peptidase M13 domain maps to 99-775 (GCPERKAFAR…MNPVHKCSVW (677 aa)). 4 cysteine pairs are disulfide-bonded: C124-C760, C132-C720, C188-C441, and C649-C772. Residues N255 and N322 are each glycosylated (N-linked (GlcNAc...) asparagine). A Zn(2+)-binding site is contributed by H612. Residue E613 is part of the active site. Zn(2+) is bound at residue H616. N-linked (GlcNAc...) asparagine glycosylation is present at N656. Zn(2+) is bound at residue E672. D676 acts as the Proton donor in catalysis.

Belongs to the peptidase M13 family. Zn(2+) is required as a cofactor. Highly expressed in the CNS, in particular in neurons of the caudate putamen, diagonal band, the paraventricular nucleus of the thalamus, part of the hypothalamus, in cranial motor nuclei, inferior olive, and substantia gelatinosa of the spinal tract trigeminal nucleus. Not detected in cerebral cortex, hippocampus and cerebellum.

It is found in the membrane. Its function is as follows. May contribute to the degradation of peptide hormones and be involved in the inactivation of neuronal peptides. Cleaves the synthetic substrate Z-Gly-Gly-Leu-pNA and releases pNA. May protect against C2-ceramide-induced apoptosis. This is Endothelin-converting enzyme-like 1 (Ecel1) from Rattus norvegicus (Rat).